The chain runs to 434 residues: F-box/kelch-repeat protein At1g55270 (434 aa).

The F-box domain occupies Pro76–Arg122. 5 Kelch repeats span residues Glu129–Gly178, His180–Asn227, Leu229–Lys276, Trp278–Gly321, and Gly325–Lys371.

The sequence is that of F-box/kelch-repeat protein At1g55270 from Arabidopsis thaliana (Mouse-ear cress).